A 355-amino-acid polypeptide reads, in one-letter code: Protein RecA (355 aa).

72–79 (GPESSGKT) provides a ligand contact to ATP.

The protein belongs to the RecA family.

Its subcellular location is the cytoplasm. Its function is as follows. Can catalyze the hydrolysis of ATP in the presence of single-stranded DNA, the ATP-dependent uptake of single-stranded DNA by duplex DNA, and the ATP-dependent hybridization of homologous single-stranded DNAs. It interacts with LexA causing its activation and leading to its autocatalytic cleavage. The polypeptide is Protein RecA (Wolbachia pipientis subsp. Culex pipiens (strain wPip)).